Consider the following 517-residue polypeptide: Ascochitine biosynthesis cluster MFS transporter (517 aa).

Residues 1–12 (MSPDSRDPEAQR) show a composition bias toward basic and acidic residues. The disordered stretch occupies residues 1 to 45 (MSPDSRDPEAQRDVGLTKNTSSVNIPLESVKTDKTSNASPIMGPG). N19 carries N-linked (GlcNAc...) asparagine glycosylation. Transmembrane regions (helical) follow at residues 75 to 95 (WVITWLLSFLNVWVTFSSTIF), 111 to 131 (VVMTLGVSLTVLGFAVGPLIW), 141 to 161 (LTPFYFGYAVFCIFQIPVGVA), 172 to 192 (FFIGFFGTSAMAVTPGVLADI), 204 to 224 (VYAAAAFIGPIFGPIVGGFVV), 232 to 252 (WTAWITLILASAFGLAALVFV), 308 to 328 (ILLLVTLYISLVYGVLYLFFV), 347 to 367 (ALPLLAVMLGTLAGCLTILFV), 390 to 410 (LMMVGSVSLPIGLFWFGWTSS), 421 to 441 (AGFPIGIGLALIWVQGLSFLI), 457 to 475 (LIRSAVGAAFPLFGAPMYH), and 485 to 505 (LLGFLSVAMIPIPVAFYYYGP).

This sequence belongs to the major facilitator superfamily. CAR1 family.

It localises to the membrane. MFS transporter; part of the gene cluster that mediates the biosynthesis the mycotoxin ascochitine, an o-quinone methide that plays a possible protective role against other microbial competitors in nature and is considered to be important for pathogenicity of legume-associated Didymella species. The sequence is that of Ascochitine biosynthesis cluster MFS transporter from Didymella fabae (Leaf and pod spot disease fungus).